The chain runs to 159 residues: MKVKLICVGKLKERYLKDGISEYQKRLSRFCQFEMIELTDERTPDKASFADNQLIMSKEAQRIHKKIGERDFVIALAIEGKQFPSETFSELISGVTVKGYSTITFIIGGSLGLDSIIKKRANMLMSFGLLTLPHQLMRLVLTEQIYRAFMITKGSPYHK.

S-adenosyl-L-methionine-binding positions include Leu-76, Gly-108, and 127 to 132; that span reads FGLLTL.

This sequence belongs to the RNA methyltransferase RlmH family. Homodimer.

The protein resides in the cytoplasm. It carries out the reaction pseudouridine(1915) in 23S rRNA + S-adenosyl-L-methionine = N(3)-methylpseudouridine(1915) in 23S rRNA + S-adenosyl-L-homocysteine + H(+). Specifically methylates the pseudouridine at position 1915 (m3Psi1915) in 23S rRNA. This chain is Ribosomal RNA large subunit methyltransferase H, found in Streptococcus pyogenes serotype M3 (strain SSI-1).